The following is a 422-amino-acid chain: Serine hydroxymethyltransferase (422 aa).

(6S)-5,6,7,8-tetrahydrofolate is bound by residues L118 and G122–L124. The residue at position 227 (K227) is an N6-(pyridoxal phosphate)lysine. Residues E243 and S351–F353 each bind (6S)-5,6,7,8-tetrahydrofolate.

This sequence belongs to the SHMT family. Homodimer. Pyridoxal 5'-phosphate is required as a cofactor.

The protein localises to the cytoplasm. The enzyme catalyses (6R)-5,10-methylene-5,6,7,8-tetrahydrofolate + glycine + H2O = (6S)-5,6,7,8-tetrahydrofolate + L-serine. It participates in one-carbon metabolism; tetrahydrofolate interconversion. It functions in the pathway amino-acid biosynthesis; glycine biosynthesis; glycine from L-serine: step 1/1. Its function is as follows. Catalyzes the reversible interconversion of serine and glycine with tetrahydrofolate (THF) serving as the one-carbon carrier. This reaction serves as the major source of one-carbon groups required for the biosynthesis of purines, thymidylate, methionine, and other important biomolecules. Also exhibits THF-independent aldolase activity toward beta-hydroxyamino acids, producing glycine and aldehydes, via a retro-aldol mechanism. The protein is Serine hydroxymethyltransferase of Fervidobacterium nodosum (strain ATCC 35602 / DSM 5306 / Rt17-B1).